We begin with the raw amino-acid sequence, 415 residues long: tRNA(Ile)-lysidine synthase (415 aa).

36-41 (SGGRDS) lines the ATP pocket.

Belongs to the tRNA(Ile)-lysidine synthase family.

The protein resides in the cytoplasm. It carries out the reaction cytidine(34) in tRNA(Ile2) + L-lysine + ATP = lysidine(34) in tRNA(Ile2) + AMP + diphosphate + H(+). Its function is as follows. Ligates lysine onto the cytidine present at position 34 of the AUA codon-specific tRNA(Ile) that contains the anticodon CAU, in an ATP-dependent manner. Cytidine is converted to lysidine, thus changing the amino acid specificity of the tRNA from methionine to isoleucine. The chain is tRNA(Ile)-lysidine synthase from Tropheryma whipplei (strain Twist) (Whipple's bacillus).